We begin with the raw amino-acid sequence, 792 residues long: Genome polyprotein (792 aa).

An interaction with host EXOC1 region spans residues 1-15 (MNNQRKKTGNPSFNM). Topologically, residues 1 to 101 (MNNQRKKTGN…LNIMNRRRRS (101 aa)) are cytoplasmic. Positions 37-72 (LLSGQGPMKLVMAFVAFLRFLAIPPTAGILKRWGSF) are hydrophobic; homodimerization of capsid protein C. A propeptide spans 101–114 (SVTMILMLLPTALA) (ER anchor for the capsid protein C, removed in mature form by serine protease NS3). The helical transmembrane segment at 102–119 (VTMILMLLPTALAFHLTT) threads the bilayer. The Extracellular portion of the chain corresponds to 120–242 (RGGEPTLIVS…QIQKVETWAL (123 aa)). Residue Asn183 is glycosylated (N-linked (GlcNAc...) asparagine; by host). Residues 243–260 (RHPGFTVIGLFLAHAIGT) form a helical membrane-spanning segment. Residue Ser261 is a topological domain, cytoplasmic. The chain crosses the membrane as a helical span at residues 262–280 (ITQKGIIFILLMLVTPSMA). The Extracellular portion of the chain corresponds to 281 to 725 (MRCVGIGNRD…IHQIFGTAYG (445 aa)). 4 cysteine pairs are disulfide-bonded: Cys283/Cys310, Cys340/Cys401, Cys354/Cys385, and Cys372/Cys396. The N-linked (GlcNAc...) asparagine; by host glycan is linked to Asn347. The interval 378-391 (DRGWGNGCGLFGKG) is fusion peptide. Asn433 is a glycosylation site (N-linked (GlcNAc...) asparagine; by host). Intrachain disulfides connect Cys465-Cys565 and Cys582-Cys613. A helical membrane pass occupies residues 726-746 (VLFSGVSWTMKIGIGILLTWL). The Cytoplasmic segment spans residues 747-752 (GLNSRS). Residues 753–775 (TSLSMTCIAVGMVTLYLGVMVQA) traverse the membrane as a helical segment. Residues 776–792 (DSGCVINWKGKELKCGS) are Extracellular-facing. A disulfide bridge links Cys779 with Cys790.

In terms of assembly, homodimer. Interacts (via N-terminus) with host EXOC1 (via C-terminus); this interaction results in EXOC1 degradation through the proteasome degradation pathway. Forms heterodimers with envelope protein E in the endoplasmic reticulum and Golgi. As to quaternary structure, homodimer; in the endoplasmic reticulum and Golgi. Interacts with protein prM. Interacts with non-structural protein 1. In terms of assembly, homodimer; Homohexamer when secreted. Interacts with envelope protein E. In terms of processing, specific enzymatic cleavages in vivo yield mature proteins. Cleavages in the lumen of endoplasmic reticulum are performed by host signal peptidase, wereas cleavages in the cytoplasmic side are performed by serine protease NS3. Signal cleavage at the 2K-4B site requires a prior NS3 protease-mediated cleavage at the 4A-2K site. N-glycosylated. Post-translationally, N-glycosylated. The excreted form is glycosylated and this is required for efficient secretion of the protein from infected cells.

It is found in the virion. It localises to the host nucleus. The protein localises to the host cytoplasm. The protein resides in the host perinuclear region. Its subcellular location is the secreted. It is found in the virion membrane. It localises to the host endoplasmic reticulum membrane. Its function is as follows. Plays a role in virus budding by binding to the cell membrane and gathering the viral RNA into a nucleocapsid that forms the core of a mature virus particle. During virus entry, may induce genome penetration into the host cytoplasm after hemifusion induced by the surface proteins. Can migrate to the cell nucleus where it modulates host functions. Overcomes the anti-viral effects of host EXOC1 by sequestering and degrading the latter through the proteasome degradation pathway. Inhibits RNA silencing by interfering with host Dicer. Functionally, prevents premature fusion activity of envelope proteins in trans-Golgi by binding to envelope protein E at pH6.0. After virion release in extracellular space, gets dissociated from E dimers. In terms of biological role, acts as a chaperone for envelope protein E during intracellular virion assembly by masking and inactivating envelope protein E fusion peptide. prM is the only viral peptide matured by host furin in the trans-Golgi network probably to avoid catastrophic activation of the viral fusion activity in acidic Golgi compartment prior to virion release. prM-E cleavage is inefficient, and many virions are only partially matured. These uncleaved prM would play a role in immune evasion. Its function is as follows. May play a role in virus budding. Exerts cytotoxic effects by activating a mitochondrial apoptotic pathway through M ectodomain. May display a viroporin activity. Binds to host cell surface receptor and mediates fusion between viral and cellular membranes. Envelope protein is synthesized in the endoplasmic reticulum in the form of heterodimer with protein prM. They play a role in virion budding in the ER, and the newly formed immature particle is covered with 60 spikes composed of heterodimer between precursor prM and envelope protein E. The virion is transported to the Golgi apparatus where the low pH causes dissociation of PrM-E heterodimers and formation of E homodimers. prM-E cleavage is inefficient, and many virions are only partially matured. These uncleaved prM would play a role in immune evasion. Functionally, involved in immune evasion, pathogenesis and viral replication. Once cleaved off the polyprotein, is targeted to three destinations: the viral replication cycle, the plasma membrane and the extracellular compartment. Essential for viral replication. Required for formation of the replication complex and recruitment of other non-structural proteins to the ER-derived membrane structures. Excreted as a hexameric lipoparticle that plays a role against host immune response. Antagonizing the complement function. Binds to the host macrophages and dendritic cells. Inhibits signal transduction originating from Toll-like receptor 3 (TLR3). In terms of biological role, disrupts the host endothelial glycocalyx layer of host pulmonary microvascular endothelial cells, inducing degradation of sialic acid and shedding of heparan sulfate proteoglycans. NS1 induces expression of sialidases, heparanase, and activates cathepsin L, which activates heparanase via enzymatic cleavage. These effects are probably linked to the endothelial hyperpermeability observed in severe dengue disease. The protein is Genome polyprotein of Aedes aegypti (Yellowfever mosquito).